The following is a 165-amino-acid chain: Transcription factor zip-10 (165 aa).

The span at A53–S71 shows a compositional bias: low complexity. The tract at residues A53–H99 is disordered. A coiled-coil region spans residues A104 to D150.

It is found in the nucleus. Transcription factor that regulates the expression of genes in response to changes in temperature. In particular, binds to the promoter region of genes such as asp-17 in response to severe cold to warm temperature transitions to promote gene expression. Promotes stress-induced death, particularly in older animals, following cold shock followed by warming and this may have evolved as a form of kin survival under thermal stress conditions, favoring the survival of younger animals. The polypeptide is Transcription factor zip-10 (Caenorhabditis elegans).